The following is a 236-amino-acid chain: MQKTTLLHEGKAKKVFLTGDSDLVIQEFKDDATAFNNKKKGTIADKGVVNNAISCKLFTMLESHGVKTHLVEKLSERDMLCRRLDIIKVEVVVRNIAAGSLVKRYGFAEGTVLDKPIVEFYLKDDDLDDPLMNESHAVALGVATLEELSVLRDRAEAINVVLKEFFAQRKLKLVDFKLEFGRYHNEILLGDEISPDTCRFWDLDTNEKMDKDRFRFDLGGVEDAYGEVQRRVLEQD.

The protein belongs to the SAICAR synthetase family.

The enzyme catalyses 5-amino-1-(5-phospho-D-ribosyl)imidazole-4-carboxylate + L-aspartate + ATP = (2S)-2-[5-amino-1-(5-phospho-beta-D-ribosyl)imidazole-4-carboxamido]succinate + ADP + phosphate + 2 H(+). It functions in the pathway purine metabolism; IMP biosynthesis via de novo pathway; 5-amino-1-(5-phospho-D-ribosyl)imidazole-4-carboxamide from 5-amino-1-(5-phospho-D-ribosyl)imidazole-4-carboxylate: step 1/2. This chain is Phosphoribosylaminoimidazole-succinocarboxamide synthase, found in Chlorobium limicola (strain DSM 245 / NBRC 103803 / 6330).